A 424-amino-acid polypeptide reads, in one-letter code: Serine--tRNA ligase (424 aa).

Positions 109 to 129 (QEDVPYGESEEDNREERKWGD) are disordered. An L-serine-binding site is contributed by 231-233 (TAE). Position 262–264 (262–264 (RSE)) interacts with ATP. E285 contacts L-serine. 349 to 352 (EISS) lines the ATP pocket. S385 contributes to the L-serine binding site.

This sequence belongs to the class-II aminoacyl-tRNA synthetase family. Type-1 seryl-tRNA synthetase subfamily. As to quaternary structure, homodimer. The tRNA molecule binds across the dimer.

The protein localises to the cytoplasm. The enzyme catalyses tRNA(Ser) + L-serine + ATP = L-seryl-tRNA(Ser) + AMP + diphosphate + H(+). The catalysed reaction is tRNA(Sec) + L-serine + ATP = L-seryl-tRNA(Sec) + AMP + diphosphate + H(+). Its pathway is aminoacyl-tRNA biosynthesis; selenocysteinyl-tRNA(Sec) biosynthesis; L-seryl-tRNA(Sec) from L-serine and tRNA(Sec): step 1/1. In terms of biological role, catalyzes the attachment of serine to tRNA(Ser). Is also able to aminoacylate tRNA(Sec) with serine, to form the misacylated tRNA L-seryl-tRNA(Sec), which will be further converted into selenocysteinyl-tRNA(Sec). The chain is Serine--tRNA ligase from Shouchella clausii (strain KSM-K16) (Alkalihalobacillus clausii).